A 340-amino-acid polypeptide reads, in one-letter code: GATA transcription factor 20 (340 aa).

Positions 1-88 (MSHHDGSKPY…MEEDEDAQHH (88 aa)) are disordered. Low complexity predominate over residues 25-47 (ADDAAAHVAPTVDHLAAVAAEAE). Positions 48–60 (AMARFEEEHRALG) are enriched in basic and acidic residues. Over residues 61-84 (AEEEYEEEEDELEEEEEEMEEDED) the composition is skewed to acidic residues. The region spanning 121–156 (QPMASNQLTLSFQGEVYVFDSVSPDKVQAVLLLLGG) is the Tify domain. A CCT domain is found at 182–224 (RVASLMRFREKRKERNFDKKIRYSVRKEVALRMQRNRGQFTSS). The disordered stretch occupies residues 215-253 (QRNRGQFTSSKPKGDEATSELTASDGSPNWGSVEGRPPS). Polar residues predominate over residues 233-244 (SELTASDGSPNW). A GATA-type zinc finger spans residues 257–284 (CHHCGINAKATPMMRRGPDGPRTLCNAC). Over residues 313-325 (DGNGSAAAPTTEQ) the composition is skewed to polar residues. The segment at 313–340 (DGNGSAAAPTTEQEIPAPATVNGHESST) is disordered.

This sequence belongs to the type IV zinc-finger family. Class C subfamily.

It localises to the nucleus. In terms of biological role, transcriptional activator that specifically binds 5'-GATA-3' or 5'-GAT-3' motifs within gene promoters. This is GATA transcription factor 20 from Oryza sativa subsp. japonica (Rice).